Reading from the N-terminus, the 92-residue chain is UPF0237 protein MA_3235 (92 aa).

The ACT domain maps to Ile7–Gln81.

It belongs to the UPF0237 family.

This Methanosarcina acetivorans (strain ATCC 35395 / DSM 2834 / JCM 12185 / C2A) protein is UPF0237 protein MA_3235.